Here is a 312-residue protein sequence, read N- to C-terminus: Methionyl-tRNA formyltransferase (312 aa).

109–112 (SLLP) contacts (6S)-5,6,7,8-tetrahydrofolate.

Belongs to the Fmt family.

It catalyses the reaction L-methionyl-tRNA(fMet) + (6R)-10-formyltetrahydrofolate = N-formyl-L-methionyl-tRNA(fMet) + (6S)-5,6,7,8-tetrahydrofolate + H(+). Its function is as follows. Attaches a formyl group to the free amino group of methionyl-tRNA(fMet). The formyl group appears to play a dual role in the initiator identity of N-formylmethionyl-tRNA by promoting its recognition by IF2 and preventing the misappropriation of this tRNA by the elongation apparatus. The sequence is that of Methionyl-tRNA formyltransferase from Listeria monocytogenes serovar 1/2a (strain ATCC BAA-679 / EGD-e).